The sequence spans 208 residues: V-type ATP synthase subunit D (208 aa).

The protein belongs to the V-ATPase D subunit family.

In terms of biological role, produces ATP from ADP in the presence of a proton gradient across the membrane. This is V-type ATP synthase subunit D from Chlamydia felis (strain Fe/C-56) (Chlamydophila felis).